A 251-amino-acid polypeptide reads, in one-letter code: NADPH-dependent oxidoreductase (251 aa).

This sequence belongs to the flavin oxidoreductase frp family. Requires FMN as cofactor.

Functionally, reduces FMN, organic nitro compounds and disulfide DTNB. Involved in maintenance of the cellular redox state and the disulfide stress response. The protein is NADPH-dependent oxidoreductase (nfrA) of Staphylococcus epidermidis (strain ATCC 35984 / DSM 28319 / BCRC 17069 / CCUG 31568 / BM 3577 / RP62A).